Here is a 258-residue protein sequence, read N- to C-terminus: Acetylglutamate kinase (258 aa).

Substrate contacts are provided by residues 44–45 (GG), arginine 66, and asparagine 158. ATP contacts are provided by residues 181-186 (DVSGIL) and 209-211 (IIT).

It belongs to the acetylglutamate kinase family. ArgB subfamily. As to quaternary structure, homodimer.

The protein resides in the cytoplasm. It catalyses the reaction N-acetyl-L-glutamate + ATP = N-acetyl-L-glutamyl 5-phosphate + ADP. Its pathway is amino-acid biosynthesis; L-arginine biosynthesis; N(2)-acetyl-L-ornithine from L-glutamate: step 2/4. In terms of biological role, catalyzes the ATP-dependent phosphorylation of N-acetyl-L-glutamate. The sequence is that of Acetylglutamate kinase from Shigella dysenteriae serotype 1 (strain Sd197).